The following is a 410-amino-acid chain: Phospho-N-acetylmuramoyl-pentapeptide-transferase (410 aa).

10 helical membrane-spanning segments follow: residues 27-47 (RMIL…PYFI), 77-97 (TPTM…VLWM), 99-119 (LTHI…LIGG), 140-160 (LFFQ…SSVN), 213-233 (PVVT…FFVI), 248-268 (GLLA…AFVS), 288-308 (IAIY…YNGY), 312-332 (VFMG…SAVL), 337-357 (FLLG…ILQV), and 389-409 (VIRF…SLKF).

This sequence belongs to the glycosyltransferase 4 family. MraY subfamily. Mg(2+) serves as cofactor.

It is found in the cell inner membrane. The catalysed reaction is UDP-N-acetyl-alpha-D-muramoyl-L-alanyl-gamma-D-glutamyl-meso-2,6-diaminopimeloyl-D-alanyl-D-alanine + di-trans,octa-cis-undecaprenyl phosphate = di-trans,octa-cis-undecaprenyl diphospho-N-acetyl-alpha-D-muramoyl-L-alanyl-D-glutamyl-meso-2,6-diaminopimeloyl-D-alanyl-D-alanine + UMP. Its pathway is cell wall biogenesis; peptidoglycan biosynthesis. Its function is as follows. Catalyzes the initial step of the lipid cycle reactions in the biosynthesis of the cell wall peptidoglycan: transfers peptidoglycan precursor phospho-MurNAc-pentapeptide from UDP-MurNAc-pentapeptide onto the lipid carrier undecaprenyl phosphate, yielding undecaprenyl-pyrophosphoryl-MurNAc-pentapeptide, known as lipid I. This Protochlamydia amoebophila (strain UWE25) protein is Phospho-N-acetylmuramoyl-pentapeptide-transferase.